The chain runs to 278 residues: Autotransporter adhesin BtaF (278 aa).

An N-terminal signal peptide occupies residues 1 to 29; the sequence is MKLPPVFVFELVENQGLANIALIRPRVIA. The interval 30 to 182 is surface exposed passenger domain; it reads PDNNLRPGGI…RAAIRQNSAA (153 aa). Positions 186-224 are outer membrane translocation of the passenger domain; that stretch reads LGQRVDGLQGQINSARKEARAGAANAAALSGLRYDNRPG. The translocator domain stretch occupies residues 225-278; it reads KVSIATGVGGFKGSTALAAGIGYTSKNENARYNVSVAYNEAGTSWNAGASFTLN.

The protein belongs to the autotransporter-2 (AT-2) (TC 1.B.40) family. As to quaternary structure, homotrimer.

It is found in the cell surface. The protein localises to the cell outer membrane. In terms of biological role, participates in bacterial attachment to several surfaces, including various extracellular matrix (ECM) components and a hydrophobic abiotic surface. Involved in adhesion to host epithelial cells and is required for full virulence in mice. Also implicated in the resistance to porcine serum. The polypeptide is Autotransporter adhesin BtaF (Brucella suis biovar 1 (strain 1330)).